Consider the following 162-residue polypeptide: Endoribonuclease YbeY (162 aa).

Residues His118, His122, and His128 each contribute to the Zn(2+) site.

The protein belongs to the endoribonuclease YbeY family. The cofactor is Zn(2+).

It localises to the cytoplasm. Its function is as follows. Single strand-specific metallo-endoribonuclease involved in late-stage 70S ribosome quality control and in maturation of the 3' terminus of the 16S rRNA. In Caulobacter sp. (strain K31), this protein is Endoribonuclease YbeY.